A 464-amino-acid polypeptide reads, in one-letter code: 26S proteasome regulatory subunit 7 homolog B (464 aa).

246-253 lines the ATP pocket; the sequence is GPPGSGKT. A Glycyl lysine isopeptide (Lys-Gly) (interchain with G-Cter in ubiquitin) cross-link involves residue K452.

Belongs to the AAA ATPase family. In terms of assembly, component of the 19S regulatory particle (RP/PA700) base subcomplex of the 26S proteasome. The 26S proteasome is composed of a core protease (CP), known as the 20S proteasome, capped at one or both ends by the 19S regulatory particle (RP/PA700). The RP/PA700 complex is composed of at least 17 different subunits in two subcomplexes, the base and the lid, which form the portions proximal and distal to the 20S proteolytic core, respectively.

It is found in the cytoplasm. Its subcellular location is the nucleus. Functionally, the 26S proteasome is involved in the ATP-dependent degradation of ubiquitinated proteins. The regulatory (or ATPase) complex confers ATP dependency and substrate specificity to the 26S complex. The protein is 26S proteasome regulatory subunit 7 homolog B (RPT1B) of Arabidopsis thaliana (Mouse-ear cress).